Consider the following 525-residue polypeptide: MRTAKFATLAALVASAAAQQACSLTTERHPSLSWNKCTAGGQCQTVQASITLDSNWRWTHQVSGSTNCYTGNKWDTSICTDAKSCAQNCCVDGADYTSTYGITTNGDSLSLKFVTKGQHSTNVGSRTYLMDGEDKYQTFELLGNEFTFDVDVSNIGCGLNGALYFVSMDADGGLSRYPGNKAGAKYGTGYCDAQCPRDIKFINGEANIEGWTGSTNDPNAGAGRYGTCCSEMDIWEANNMATAFTPHPCTIIGQSRCEGDSCGGTYSNERYAGVCDPDGCDFNSYRQGNKTFYGKGMTVDTTKKITVVTQFLKDANGDLGEIKRFYVQDGKIIPNSESTIPGVEGNSITQDWCDRQKVAFGDIDDFNRKGGMKQMGKALAGPMVLVMSIWDDHASNMLWLDSTFPVDAAGKPGAERGACPTTSGVPAEVEAEAPNSNVVFSNIRFGPIGSTVAGLPGAGNGGNNGGNPPPPTTTTSSAPATTTTASAGPKAGRWQQCGGIGFTGPTQCEEPYICTKLNDWYSQCL.

Residues 1–18 (MRTAKFATLAALVASAAA) form the signal peptide. Residues 19-467 (QQACSLTTER…AGNGGNNGGN (449 aa)) form a catalytic region. The Nucleophile role is filled by glutamate 231. The Proton donor role is filled by glutamate 236. Asparagine 289 carries an N-linked (GlcNAc...) asparagine glycan. The disordered stretch occupies residues 454-492 (GLPGAGNGGNNGGNPPPPTTTTSSAPATTTTASAGPKAG). Gly residues predominate over residues 456 to 465 (PGAGNGGNNG). The segment at 468 to 489 (PPPPTTTTSSAPATTTTASAGP) is linker. Over residues 473–489 (TTTSSAPATTTTASAGP) the composition is skewed to low complexity. Positions 489–525 (PKAGRWQQCGGIGFTGPTQCEEPYICTKLNDWYSQCL) constitute a CBM1 domain. Disulfide bonds link cysteine 497/cysteine 514 and cysteine 508/cysteine 524.

It belongs to the glycosyl hydrolase 7 (cellulase C) family.

It carries out the reaction Hydrolysis of (1-&gt;4)-beta-D-glucosidic linkages in cellulose and cellotetraose, releasing cellobiose from the non-reducing ends of the chains.. The biological conversion of cellulose to glucose generally requires three types of hydrolytic enzymes: (1) Endoglucanases which cut internal beta-1,4-glucosidic bonds; (2) Exocellobiohydrolases that cut the disaccharide cellobiose from the non-reducing end of the cellulose polymer chain; (3) Beta-1,4-glucosidases which hydrolyze the cellobiose and other short cello-oligosaccharides to glucose. The polypeptide is Exoglucanase 1 (CBH-1) (Humicola insolens (Soft-rot fungus)).